A 513-amino-acid polypeptide reads, in one-letter code: MTGEKIRSLHRDQKPSKDEDLLEPDEEATADGTFTRTSKLKSSKMFSNHKVIRSPSNPALLQNHHHHHQQQISPMTPGESKTDVYFPVHECVIKGDIRKLSSLIRSHNIGQKDNHGNTPLHLAVMLGNKECAHLLLAHNAPVKVKNAQGWSPLAEAISYGDRQMITALLRKLKQQSRESVEEKRPRLLKALKELGDFYLELHWDFQSWVPLLSRILPSDACKIYKQGINIRLDTTLIDFTDMKCQRGDLSFIFNGDAAPSESFVVLDNEQKVYQRIHHEESEMETEEEVDILMSSDIYSATLSTKSITFSRAQTGWLFREDKTERVGNFLADFYTVNGLILESRKRREHLTEEDILRNKAIMESLSKGGNLMEQTFEPVRRPSLTPPPPNTITWEEYISAENGKAPHLGRELVCKENKKTFKATIAMSQDFPLEIESLLNVLEVIAPFKHFNKLREFVQMKLPPGFPVKLDIPVFPTITATVTFQEFHYGEFEDAIFTIPDDYKEDPSRFPDL.

Basic and acidic residues predominate over residues 1 to 19 (MTGEKIRSLHRDQKPSKDE). Disordered stretches follow at residues 1–34 (MTGE…DGTF) and 55–77 (PSNP…PMTP). A compositionally biased stretch (acidic residues) spans 20–29 (DLLEPDEEAT). ANK repeat units lie at residues 83–114 (DVYF…QKDN), 115–144 (HGNT…PVKV), and 148–177 (QGWS…QQSR).

It is found in the endoplasmic reticulum membrane. Acts as a molecular chaperone for G protein-coupled receptors, regulating their biogenesis and exit from the ER. This Xenopus laevis (African clawed frog) protein is Ankyrin repeat domain-containing protein 13C-B (ankrd13c-b).